Here is a 353-residue protein sequence, read N- to C-terminus: MDKYDRLSKLGEGSYGVVYKCKNRDTGQIVAIKKFVETEDDPHIKKIALREIRMLKQLKHQNLVGLIEVFKRNRKLHLVFELCDRTVLHELEKNPHGVNDELIKKIIYQLLEALKFCHSHKCIHRDVKPENIFLTRNDQVKLGDFGFARIINTTEMYTDYVATRWYRSPELLVGDVQYGPPVDIWAVGCVYAELLTGEALWPGRSDIDQLYHIRKTLGEFLPRHISIFRTNQFFFGLSIPEPEHLEPLPSKLPNASSAQLDFLQKCFEMSPDRRFSCSELMLHGIFSNWILRIRQDESTPTGLTSKRSPNYLPLLNGNSNNLVSKNFSLQGGNHGNNNNNGNGINRNFLPTIS.

The 283-residue stretch at 4 to 286 (YDRLSKLGEG…CSELMLHGIF (283 aa)) folds into the Protein kinase domain. ATP-binding positions include 10–18 (LGEGSYGVV) and K33. The Proton acceptor role is filled by D126. Positions 331–353 (GGNHGNNNNNGNGINRNFLPTIS) are disordered. The segment covering 335–347 (GNNNNNGNGINRN) has biased composition (low complexity).

It belongs to the protein kinase superfamily. Ser/Thr protein kinase family. As to expression, specifically expressed in head and tail ciliated sensory neurons.

Its subcellular location is the cell projection. The protein localises to the cilium. It catalyses the reaction L-seryl-[protein] + ATP = O-phospho-L-seryl-[protein] + ADP + H(+). It carries out the reaction L-threonyl-[protein] + ATP = O-phospho-L-threonyl-[protein] + ADP + H(+). In terms of biological role, modulates cilium assembly. This Caenorhabditis elegans protein is Cyclin-dependent kinase-like 1.